A 647-amino-acid polypeptide reads, in one-letter code: Phosphomethylpyrimidine synthase (647 aa).

Residues N235, M264, Y293, H329, 349–351, 390–393, and E429 contribute to the substrate site; these read SRG and DGLR. H433 serves as a coordination point for Zn(2+). Y456 contacts substrate. Residue H497 coordinates Zn(2+). Positions 577, 580, and 585 each coordinate [4Fe-4S] cluster. The tract at residues 623–647 is disordered; sequence KSAEFKASGSELYHPAVSHEEVAEG.

Belongs to the ThiC family. In terms of assembly, homodimer. The cofactor is [4Fe-4S] cluster.

The catalysed reaction is 5-amino-1-(5-phospho-beta-D-ribosyl)imidazole + S-adenosyl-L-methionine = 4-amino-2-methyl-5-(phosphooxymethyl)pyrimidine + CO + 5'-deoxyadenosine + formate + L-methionine + 3 H(+). It functions in the pathway cofactor biosynthesis; thiamine diphosphate biosynthesis. Catalyzes the synthesis of the hydroxymethylpyrimidine phosphate (HMP-P) moiety of thiamine from aminoimidazole ribotide (AIR) in a radical S-adenosyl-L-methionine (SAM)-dependent reaction. This is Phosphomethylpyrimidine synthase from Vibrio vulnificus (strain CMCP6).